Here is a 201-residue protein sequence, read N- to C-terminus: Akirin-2 (201 aa).

2 positions are modified to phosphoserine: Ser-18 and Ser-21. A Nuclear localization signal motif is present at residues 22–27 (PKRRRC). Phosphoserine is present on Ser-55. An SYVS motif motif is present at residues 198-201 (SYVS).

This sequence belongs to the akirin family. As to quaternary structure, homodimer. Interacts with IPO9; the interaction is direct. Associates with 20S and 26S proteasomes. Interacts with SMARCD1; promoting SWI/SNF complex recruitment. Interacts with NFKBIZ. Interacts with YWHAB. Post-translationally, polyubiquitinated. Polyubiquitination is dependent of UBR5 that extends pre-ubiquitinated AKIRIN2. As to expression, highly expressed in testis, cerebrum and cerebellum, and barely detectable in liver, heart, spleen and muscle. Also highly expressed in various tumor cells from hepatoma, glioblastoma and pheochromocytoma.

It is found in the nucleus. The protein resides in the cytoplasm. The protein localises to the membrane. Functionally, molecular adapter that acts as a bridge between a variety of multiprotein complexes, and which is involved in embryonic development, immunity, myogenesis and brain development. Plays a key role in nuclear protein degradation by promoting import of proteasomes into the nucleus: directly binds to fully assembled 20S proteasomes at one end and to nuclear import receptor IPO9 at the other end, bridging them together and mediating the import of pre-assembled proteasome complexes through the nuclear pore. Involved in innate immunity by regulating the production of interleukin-6 (IL6) downstream of Toll-like receptor (TLR): acts by bridging the NF-kappa-B inhibitor NFKBIZ and the SWI/SNF complex, leading to promote induction of IL6. Also involved in adaptive immunity by promoting B-cell activation. Involved in brain development: required for the survival and proliferation of cerebral cortical progenitor cells. Involved in myogenesis: required for skeletal muscle formation and skeletal development, possibly by regulating expression of muscle differentiation factors. Also plays a role in facilitating interdigital tissue regression during limb development. The polypeptide is Akirin-2 (Rattus norvegicus (Rat)).